The chain runs to 536 residues: Formate--tetrahydrofolate ligase (536 aa).

ATP is bound at residue 51 to 58; it reads TPAGEGKT.

This sequence belongs to the formate--tetrahydrofolate ligase family.

It carries out the reaction (6S)-5,6,7,8-tetrahydrofolate + formate + ATP = (6R)-10-formyltetrahydrofolate + ADP + phosphate. The protein operates within one-carbon metabolism; tetrahydrofolate interconversion. The sequence is that of Formate--tetrahydrofolate ligase from Thermoplasma acidophilum (strain ATCC 25905 / DSM 1728 / JCM 9062 / NBRC 15155 / AMRC-C165).